A 421-amino-acid polypeptide reads, in one-letter code: Tyrosine--tRNA ligase (421 aa).

Tyr36 contacts L-tyrosine. Residues 41–50 (PTADSLHIGH) carry the 'HIGH' region motif. L-tyrosine-binding residues include Tyr170 and Gln174. The 'KMSKS' region signature appears at 231–235 (KFGKS). An ATP-binding site is contributed by Lys234. In terms of domain architecture, S4 RNA-binding spans 353-420 (TNIVEALIET…KKKYFMVNYQ (68 aa)).

The protein belongs to the class-I aminoacyl-tRNA synthetase family. TyrS type 1 subfamily. As to quaternary structure, homodimer.

It is found in the cytoplasm. It carries out the reaction tRNA(Tyr) + L-tyrosine + ATP = L-tyrosyl-tRNA(Tyr) + AMP + diphosphate + H(+). Catalyzes the attachment of tyrosine to tRNA(Tyr) in a two-step reaction: tyrosine is first activated by ATP to form Tyr-AMP and then transferred to the acceptor end of tRNA(Tyr). The sequence is that of Tyrosine--tRNA ligase from Staphylococcus epidermidis (strain ATCC 35984 / DSM 28319 / BCRC 17069 / CCUG 31568 / BM 3577 / RP62A).